The sequence spans 311 residues: Coproporphyrin III ferrochelatase (311 aa).

Residues Tyr-12, Arg-29, 45-46 (RY), Ser-53, and Tyr-124 contribute to the Fe-coproporphyrin III site. Positions 182 and 263 each coordinate Fe(2+).

It belongs to the ferrochelatase family.

The protein localises to the cytoplasm. The catalysed reaction is Fe-coproporphyrin III + 2 H(+) = coproporphyrin III + Fe(2+). Its pathway is porphyrin-containing compound metabolism; protoheme biosynthesis. Functionally, involved in coproporphyrin-dependent heme b biosynthesis. Catalyzes the insertion of ferrous iron into coproporphyrin III to form Fe-coproporphyrin III. In Bacillus mycoides (strain KBAB4) (Bacillus weihenstephanensis), this protein is Coproporphyrin III ferrochelatase.